Reading from the N-terminus, the 1608-residue chain is Mitogen-activated protein kinase kinase kinase 4 (1608 aa).

Residues Met-1–Glu-23 are compositionally biased toward low complexity. 2 disordered regions span residues Met-1–Glu-136 and Ile-429–Ile-478. The span at Glu-24–Glu-37 shows a compositional bias: pro residues. The segment covering Ser-66–Asn-76 has biased composition (acidic residues). Ser-84 bears the Phosphoserine mark. The span at Gln-91–Arg-101 shows a compositional bias: basic residues. Ser-431 is subject to Phosphoserine. The residue at position 447 (Thr-447) is a Phosphothreonine. Phosphoserine occurs at positions 456 and 457. Positions Ser-456–Ile-466 are enriched in acidic residues. The residue at position 458 (Thr-458) is a Phosphothreonine. A phosphoserine mark is found at Ser-461, Ser-481, and Ser-499. Disordered stretches follow at residues Cys-1157–Ala-1190, Ala-1202–Glu-1231, and Phe-1244–Ser-1274. Residues Ser-1217 to Pro-1230 are compositionally biased toward polar residues. Ser-1252 and Ser-1274 each carry phosphoserine. Residues Ser-1252–Ala-1261 are compositionally biased toward basic and acidic residues. The 259-residue stretch at Trp-1343–Val-1601 folds into the Protein kinase domain. ATP contacts are provided by residues Ile-1349–Val-1357 and Lys-1372. The Proton acceptor role is filled by Asp-1463.

This sequence belongs to the protein kinase superfamily. STE Ser/Thr protein kinase family. MAP kinase kinase kinase subfamily. Monomer and homodimer. Homodimerization enhances kinase activity. Interacts with TRAF4; this promotes homodimerization. Binds both upstream activators and downstream substrates in multimolecular complexes. Interacts with AXIN1 and DIXDC1; interaction with DIXDC1 prevents interaction with AXIN1. Interacts with GADD45 and MAP2K6. Interacts with ZFP36; this interaction enhances the association with SH3KBP1/CIN85. Interacts with SH3KBP1; this interaction enhances the association with ZFP36. Interacts with CDC42. Mg(2+) serves as cofactor. Expressed at high levels in heart, placenta, skeletal muscle and pancreas, and at lower levels in other tissues.

It is found in the cytoplasm. Its subcellular location is the perinuclear region. The enzyme catalyses L-seryl-[protein] + ATP = O-phospho-L-seryl-[protein] + ADP + H(+). It carries out the reaction L-threonyl-[protein] + ATP = O-phospho-L-threonyl-[protein] + ADP + H(+). With respect to regulation, N-terminal autoinhibitory domain interacts with the C-terminal kinase domain, inhibiting kinase activity, and preventing interaction with its substrate, MAP2K6. The GADD45 proteins activate the kinase by binding to the N-terminal domain. Activated by phosphorylation on Thr-1505. Functionally, component of a protein kinase signal transduction cascade. Activates the CSBP2, P38 and JNK MAPK pathways, but not the ERK pathway. Specifically phosphorylates and activates MAP2K4 and MAP2K6. The protein is Mitogen-activated protein kinase kinase kinase 4 (MAP3K4) of Homo sapiens (Human).